A 597-amino-acid polypeptide reads, in one-letter code: NADPH-dependent diflavin oxidoreductase 1 (597 aa).

One can recognise a Flavodoxin-like domain in the interval 6–150; that stretch reads LLVLFGSQTG…AVDPWLRDLW (145 aa). FMN-binding positions include 12–17, 59–62, 97–106, and D132; these read SQTGTA, ATTG, and LGDSSYAKFN. Residues 188 to 207 form a disordered region; it reads GSEGQRVAHPGSQEPPSESK. The FAD-binding FR-type domain maps to 206–447; that stretch reads SKPFLAPMIS…VRPGSLAFPE (242 aa). FAD-binding positions include R350, 382–385, and 416–419; these read RAFS and GLCS. NADP(+)-binding positions include T460, 515-516, 521-525, and D558; these read SR and KVYVQ. FAD is bound at residue W596.

This sequence belongs to the NADPH-dependent diflavin oxidoreductase NDOR1 family. It in the N-terminal section; belongs to the flavodoxin family. In the C-terminal section; belongs to the flavoprotein pyridine nucleotide cytochrome reductase family. In terms of assembly, interacts with CIAPIN1; as part of the cytosolic iron-sulfur (Fe-S) protein assembly (CIA) machinery. Interacts with DCPS. FAD is required as a cofactor. The cofactor is FMN. Low expression in brain, heart, kidney, pancreas, prostate and skeletal muscle. Highest levels in the placenta. Expressed in cancer cell lines including promyelocytic leukemia, HeLaS3, chronic myelagenous leukemia, lymphoblastic leukemia, Burkitt's lymphoma, colorectal adenocarcinoma, lung carcinoma, and melanoma G-361.

The protein resides in the cytoplasm. Its subcellular location is the perinuclear region. It catalyses the reaction 2 oxidized [2Fe-2S]-[protein] + NADPH = 2 reduced [2Fe-2S]-[protein] + NADP(+) + H(+). NADPH-dependent reductase which is a central component of the cytosolic iron-sulfur (Fe-S) protein assembly (CIA) machinery. Transfers electrons from NADPH via its FAD and FMN prosthetic groups to the [2Fe-2S] cluster of CIAPIN1, another key component of the CIA machinery. In turn, this reduced cluster provides electrons for assembly of cytosolic iron-sulfur cluster proteins. It can also reduce the [2Fe-2S] cluster of CISD1 and activate this protein implicated in Fe/S cluster repair. In vitro can fully activate methionine synthase/MTR in the presence of soluble cytochrome b5/CYB5A. The sequence is that of NADPH-dependent diflavin oxidoreductase 1 from Homo sapiens (Human).